A 212-amino-acid polypeptide reads, in one-letter code: External core antigen (212 aa).

Residues 1–19 form the signal peptide; it reads MQLFHLCLIISCSCPTVQA. Positions 25 to 27 are HBEAG; that stretch reads GWL. Positions 165 to 212 are disordered; the sequence is NAPILSTLPETTVVRRRGRSPRRRTPSPRRRRSQSPRRRRSQSRESQC. Basic residues predominate over residues 178 to 205; it reads VRRRGRSPRRRTPSPRRRRSQSPRRRRS. Residues 184-190 form a 1; half-length repeat; the sequence is SPRRRTP. Positions 184-206 are 3 X 8 AA repeats of S-P-R-R-R-R-S-Q; that stretch reads SPRRRTPSPRRRRSQSPRRRRSQ. The propeptide occupies 184-212; that stretch reads SPRRRTPSPRRRRSQSPRRRRSQSRESQC. 2 tandem repeats follow at residues 191–198 and 199–206.

This sequence belongs to the orthohepadnavirus precore antigen family. Homodimerizes. Phosphorylated. Post-translationally, cleaved by host furin.

It localises to the secreted. The protein resides in the host nucleus. Its function is as follows. May regulate immune response to the intracellular capsid in acting as a T-cell tolerogen, by having an immunoregulatory effect which prevents destruction of infected cells by cytotoxic T-cells. This immune regulation may predispose to chronicity during perinatal infections and prevent severe liver injury during adult infections. The sequence is that of External core antigen from Homo sapiens (Human).